The following is a 171-amino-acid chain: MAEKRNIFLIGPMGAGKSTIGRHLADELHLEFYDSDQEIEKRTGADIAWIFDLEGEEGFRAREETVINDLTDKQGIVLATGGGSVVSKAVRNRLSARGIVVYLQTTIDKQVARTQRDKRRPLLQKDDPETVLRRLAEERNPMYEDAADYIVDTDEQSARAVANQIIEKINQ.

Position 14-19 (14-19 (GAGKST)) interacts with ATP. A Mg(2+)-binding site is contributed by S18. Positions 36, 60, and 82 each coordinate substrate. R120 provides a ligand contact to ATP. R139 provides a ligand contact to substrate. Residue Q156 coordinates ATP.

The protein belongs to the shikimate kinase family. Monomer. Mg(2+) is required as a cofactor.

Its subcellular location is the cytoplasm. It carries out the reaction shikimate + ATP = 3-phosphoshikimate + ADP + H(+). It functions in the pathway metabolic intermediate biosynthesis; chorismate biosynthesis; chorismate from D-erythrose 4-phosphate and phosphoenolpyruvate: step 5/7. In terms of biological role, catalyzes the specific phosphorylation of the 3-hydroxyl group of shikimic acid using ATP as a cosubstrate. This Pseudoalteromonas atlantica (strain T6c / ATCC BAA-1087) protein is Shikimate kinase.